We begin with the raw amino-acid sequence, 192 residues long: Xanthine phosphoribosyltransferase (192 aa).

Residues Leu20 and Asn27 each contribute to the xanthine site. 5-phospho-alpha-D-ribose 1-diphosphate is bound at residue 128–132 (ANGDA). Residue Lys156 coordinates xanthine.

It belongs to the purine/pyrimidine phosphoribosyltransferase family. Xpt subfamily. Homodimer.

The protein localises to the cytoplasm. The enzyme catalyses XMP + diphosphate = xanthine + 5-phospho-alpha-D-ribose 1-diphosphate. It participates in purine metabolism; XMP biosynthesis via salvage pathway; XMP from xanthine: step 1/1. In terms of biological role, converts the preformed base xanthine, a product of nucleic acid breakdown, to xanthosine 5'-monophosphate (XMP), so it can be reused for RNA or DNA synthesis. This Staphylococcus aureus (strain bovine RF122 / ET3-1) protein is Xanthine phosphoribosyltransferase.